A 76-amino-acid polypeptide reads, in one-letter code: Exodeoxyribonuclease 7 small subunit (76 aa).

The protein belongs to the XseB family. Heterooligomer composed of large and small subunits.

It localises to the cytoplasm. It carries out the reaction Exonucleolytic cleavage in either 5'- to 3'- or 3'- to 5'-direction to yield nucleoside 5'-phosphates.. In terms of biological role, bidirectionally degrades single-stranded DNA into large acid-insoluble oligonucleotides, which are then degraded further into small acid-soluble oligonucleotides. This chain is Exodeoxyribonuclease 7 small subunit, found in Geobacter sulfurreducens (strain ATCC 51573 / DSM 12127 / PCA).